The following is a 342-amino-acid chain: S-adenosylmethionine:tRNA ribosyltransferase-isomerase (342 aa).

The protein belongs to the QueA family. Monomer.

The protein resides in the cytoplasm. It carries out the reaction 7-aminomethyl-7-carbaguanosine(34) in tRNA + S-adenosyl-L-methionine = epoxyqueuosine(34) in tRNA + adenine + L-methionine + 2 H(+). It participates in tRNA modification; tRNA-queuosine biosynthesis. Transfers and isomerizes the ribose moiety from AdoMet to the 7-aminomethyl group of 7-deazaguanine (preQ1-tRNA) to give epoxyqueuosine (oQ-tRNA). The protein is S-adenosylmethionine:tRNA ribosyltransferase-isomerase of Campylobacter jejuni (strain RM1221).